We begin with the raw amino-acid sequence, 72 residues long: Translation initiation factor IF-1 (72 aa).

The S1-like domain maps to 1 to 72 (MAKEESIEIE…SKGRITYRYK (72 aa)).

It belongs to the IF-1 family. As to quaternary structure, component of the 30S ribosomal translation pre-initiation complex which assembles on the 30S ribosome in the order IF-2 and IF-3, IF-1 and N-formylmethionyl-tRNA(fMet); mRNA recruitment can occur at any time during PIC assembly.

The protein resides in the cytoplasm. One of the essential components for the initiation of protein synthesis. Stabilizes the binding of IF-2 and IF-3 on the 30S subunit to which N-formylmethionyl-tRNA(fMet) subsequently binds. Helps modulate mRNA selection, yielding the 30S pre-initiation complex (PIC). Upon addition of the 50S ribosomal subunit IF-1, IF-2 and IF-3 are released leaving the mature 70S translation initiation complex. In Chlorobium phaeovibrioides (strain DSM 265 / 1930) (Prosthecochloris vibrioformis (strain DSM 265)), this protein is Translation initiation factor IF-1.